The chain runs to 149 residues: Small heat shock protein IbpB (149 aa).

In terms of domain architecture, sHSP spans 26-137; it reads SQEPIDFPPY…QPQRIAIGGG (112 aa).

This sequence belongs to the small heat shock protein (HSP20) family. As to quaternary structure, homodimer. Forms homomultimers of about 100-150 subunits at optimal growth temperatures. Conformation changes to oligomers at high temperatures or high ionic concentrations. The decrease in size of the multimers is accompanied by an increase in chaperone activity.

The protein localises to the cytoplasm. Its function is as follows. Associates with aggregated proteins, together with IbpA, to stabilize and protect them from irreversible denaturation and extensive proteolysis during heat shock and oxidative stress. Aggregated proteins bound to the IbpAB complex are more efficiently refolded and reactivated by the ATP-dependent chaperone systems ClpB and DnaK/DnaJ/GrpE. Its activity is ATP-independent. The sequence is that of Small heat shock protein IbpB from Pectobacterium carotovorum subsp. carotovorum (strain PC1).